Consider the following 289-residue polypeptide: Probable WRKY transcription factor 38 (289 aa).

The interval 62–103 (PETEDDQFSDLSSRDSSPPPQGSPSKKRKIDSTNSSENWRDD) is disordered. Positions 104–172 (SPDPIYYDGY…YFGHHTCKTE (69 aa)) form a DNA-binding region, WRKY. Residues 249-266 (LSSPSGSYPPSSSSGSES) show a composition bias toward low complexity. The tract at residues 249–278 (LSSPSGSYPPSSSSGSESADFNSDLLFDNP) is disordered.

It belongs to the WRKY group III family.

The protein resides in the nucleus. Transcription factor. Interacts specifically with the W box (5'-(T)TGAC[CT]-3'), a frequently occurring elicitor-responsive cis-acting element. In Arabidopsis thaliana (Mouse-ear cress), this protein is Probable WRKY transcription factor 38 (WRKY38).